Reading from the N-terminus, the 366-residue chain is Ribosomal RNA large subunit methyltransferase M (366 aa).

S-adenosyl-L-methionine-binding positions include Ser-188, 221–224 (CPGG), Asp-240, Asp-260, and Asp-277. The active-site Proton acceptor is the Lys-306.

The protein belongs to the class I-like SAM-binding methyltransferase superfamily. RNA methyltransferase RlmE family. RlmM subfamily. As to quaternary structure, monomer.

Its subcellular location is the cytoplasm. The catalysed reaction is cytidine(2498) in 23S rRNA + S-adenosyl-L-methionine = 2'-O-methylcytidine(2498) in 23S rRNA + S-adenosyl-L-homocysteine + H(+). In terms of biological role, catalyzes the 2'-O-methylation at nucleotide C2498 in 23S rRNA. This Salmonella paratyphi C (strain RKS4594) protein is Ribosomal RNA large subunit methyltransferase M.